We begin with the raw amino-acid sequence, 381 residues long: Cytochrome b (381 aa).

4 consecutive transmembrane segments (helical) span residues 33–53, 77–98, 113–133, and 178–198; these read FGSL…FLAM, WLIR…FLHV, WNIG…GYVL, and FFAF…VHLL. The heme b site is built by His83 and His97. Heme b is bound by residues His182 and His196. Residue His201 coordinates a ubiquinone. 4 consecutive transmembrane segments (helical) span residues 226–246, 288–308, 320–340, and 347–367; these read IKDA…ALFS, LGGV…PLLH, VSQT…WIGG, and FIII…VLMP.

It belongs to the cytochrome b family. As to quaternary structure, the cytochrome bc1 complex contains 11 subunits: 3 respiratory subunits (MT-CYB, CYC1 and UQCRFS1), 2 core proteins (UQCRC1 and UQCRC2) and 6 low-molecular weight proteins (UQCRH/QCR6, UQCRB/QCR7, UQCRQ/QCR8, UQCR10/QCR9, UQCR11/QCR10 and a cleavage product of UQCRFS1). This cytochrome bc1 complex then forms a dimer. Heme b is required as a cofactor.

The protein resides in the mitochondrion inner membrane. Functionally, component of the ubiquinol-cytochrome c reductase complex (complex III or cytochrome b-c1 complex) that is part of the mitochondrial respiratory chain. The b-c1 complex mediates electron transfer from ubiquinol to cytochrome c. Contributes to the generation of a proton gradient across the mitochondrial membrane that is then used for ATP synthesis. In Ningaui yvonnae (Southern ningaui), this protein is Cytochrome b (MT-CYB).